The sequence spans 464 residues: Glucose-6-phosphate isomerase (464 aa).

The Proton donor role is filled by glutamate 290. Residues histidine 319 and lysine 433 contribute to the active site.

It belongs to the GPI family.

The protein resides in the cytoplasm. It carries out the reaction alpha-D-glucose 6-phosphate = beta-D-fructose 6-phosphate. It participates in carbohydrate biosynthesis; gluconeogenesis. It functions in the pathway carbohydrate degradation; glycolysis; D-glyceraldehyde 3-phosphate and glycerone phosphate from D-glucose: step 2/4. Catalyzes the reversible isomerization of glucose-6-phosphate to fructose-6-phosphate. This chain is Glucose-6-phosphate isomerase, found in Carboxydothermus hydrogenoformans (strain ATCC BAA-161 / DSM 6008 / Z-2901).